A 785-amino-acid chain; its full sequence is Uncoating factor OPG117 (785 aa).

Aspartate 170 is a catalytic residue. The segment at 342–469 (TERGDHIVWI…ELMNIINDIQ (128 aa)) is primase. The SF3 helicase domain maps to 477-639 (KNRELYEKTL…FSQPSGREAA (163 aa)). 503–510 (GETATGKS) is an ATP binding site.

This sequence belongs to the orthopoxvirus OPG117 family. In terms of assembly, homomultimer; hexamer. Interacts with OPG148.

Its subcellular location is the host cytoplasm. Multifunctional protein required for genome uncoating and replication. Major viral uncoating protein that is required for the release of the viral genome from incoming viral cores containing the viral DNA genome. Possesses an ATPase activity that is required for hexamerization and uncoating. The sequence is that of Uncoating factor OPG117 (OPG117) from Bos taurus (Bovine).